Here is a 356-residue protein sequence, read N- to C-terminus: NADH-quinone oxidoreductase subunit H (356 aa).

8 consecutive transmembrane segments (helical) span residues 18 to 38 (IVMI…IAYI), 87 to 107 (GVFL…WAVI), 120 to 140 (VGIL…IMAG), 166 to 186 (IGFV…SAVV), 205 to 225 (ILNW…VSAL), 265 to 285 (AITT…LPPI), 292 to 312 (WVPG…LIAM), and 333 to 353 (FLPL…FAGI).

Belongs to the complex I subunit 1 family. NDH-1 is composed of 14 different subunits. Subunits NuoA, H, J, K, L, M, N constitute the membrane sector of the complex.

The protein resides in the cell inner membrane. It catalyses the reaction a quinone + NADH + 5 H(+)(in) = a quinol + NAD(+) + 4 H(+)(out). Functionally, NDH-1 shuttles electrons from NADH, via FMN and iron-sulfur (Fe-S) centers, to quinones in the respiratory chain. The immediate electron acceptor for the enzyme in this species is believed to be ubiquinone. Couples the redox reaction to proton translocation (for every two electrons transferred, four hydrogen ions are translocated across the cytoplasmic membrane), and thus conserves the redox energy in a proton gradient. This subunit may bind ubiquinone. This is NADH-quinone oxidoreductase subunit H from Bradyrhizobium sp. (strain BTAi1 / ATCC BAA-1182).